The following is a 353-amino-acid chain: 6-phosphogluconolactonase (353 aa).

The protein belongs to the cycloisomerase 2 family.

It is found in the cytoplasm. The enzyme catalyses 6-phospho-D-glucono-1,5-lactone + H2O = 6-phospho-D-gluconate + H(+). It participates in carbohydrate degradation; pentose phosphate pathway; D-ribulose 5-phosphate from D-glucose 6-phosphate (oxidative stage): step 2/3. In terms of biological role, carboxylic ester hydrolase that may be involved in ulvan degradation. Ulvan is the main polysaccharide component of the Ulvales (green seaweed) cell wall. It is composed of disaccharide building blocks comprising 3-sulfated rhamnose (Rha3S) linked to D-glucuronic acid (GlcA), L-iduronic acid (IduA), or D-xylose (Xyl). Catalyzes the hydrolysis of 6-phosphogluconolactone to 6-phosphogluconate. The protein is 6-phosphogluconolactonase (pgl) of Formosa agariphila (strain DSM 15362 / KCTC 12365 / LMG 23005 / KMM 3901 / M-2Alg 35-1).